A 386-amino-acid chain; its full sequence is Putative nickel insertion protein (386 aa).

It belongs to the LarC family.

This chain is Putative nickel insertion protein, found in Dictyoglomus thermophilum (strain ATCC 35947 / DSM 3960 / H-6-12).